The chain runs to 1151 residues: Syntaxin-binding protein 5 (1151 aa).

Positions 14–34 (TAGSSSASQQQQQQHPPGNRE) are disordered. Residues 17 to 27 (SSSASQQQQQQ) show a composition bias toward low complexity. WD repeat units follow at residues 61-94 (SALA…CYCQ), 101-140 (VIQL…SLKF), 145-181 (VTFC…GYVI), 200-234 (HISD…DYRY), 240-272 (IHSV…PAKP), 294-336 (PILK…KSTA), 344-378 (IVDF…LIDL), 400-477 (TCCE…YKLK), 505-619 (QIIS…ELVI), and 633-695 (TSLA…SGAG). Disordered regions lie at residues 555–595 (ETPE…GLRD) and 674–729 (SNDP…EQKM). S692 is modified (phosphoserine). The span at 712-721 (SPTSGSSSPH) shows a compositional bias: low complexity. A Phosphoserine; by PKA modification is found at S723. Position 759 is a phosphoserine (S759). Position 762 is a phosphothreonine (T762). S782 is modified (phosphoserine). Residue T784 is modified to Phosphothreonine. S785 bears the Phosphoserine mark. WD repeat units follow at residues 794–851 (ISAL…SGTI), 860–934 (RMAF…QNCA), 939–983 (ITET…LDVY), and 997–1020 (CFTN…TYSQ). The span at 881 to 892 (HNVPEEKDEKEK) shows a compositional bias: basic and acidic residues. Residues 881 to 906 (HNVPEEKDEKEKLKKRRPVSVSPSSS) form a disordered region. 2 positions are modified to phosphoserine: S900 and S902. Position 1039 is a phosphothreonine (T1039). 2 positions are modified to phosphoserine: S1058 and S1131. The v-SNARE coiled-coil homology domain maps to 1086-1146 (GIEGVKGAAS…HEIMLKYKDK (61 aa)).

This sequence belongs to the WD repeat L(2)GL family. As to quaternary structure, interacts with STX1A and STX1B via its v-SNARE homology domain. Part of a complex that contains STX1, STXBP5, SNAP25 and SYT1. Part of a complex that contains STXBP5, STX4A and SNAP23.

The protein resides in the cytoplasm. Its subcellular location is the cell membrane. It localises to the cytoplasmic vesicle membrane. The protein localises to the cytoplasmic vesicle. It is found in the secretory vesicle. The protein resides in the synaptic vesicle. Its subcellular location is the synapse. Functionally, plays a regulatory role in calcium-dependent exocytosis and neurotransmitter release. Inhibits membrane fusion between transport vesicles and the plasma membrane. May modulate the assembly of trans-SNARE complexes between transport vesicles and the plasma membrane. Inhibits translocation of GLUT4 from intracellular vesicles to the plasma membrane. Competes with STXBP1 for STX1 binding. The protein is Syntaxin-binding protein 5 (STXBP5) of Homo sapiens (Human).